The sequence spans 657 residues: UvrABC system protein B (657 aa).

In terms of domain architecture, Helicase ATP-binding spans K23–R414. Residue G36 to T43 coordinates ATP. A Beta-hairpin motif is present at residues Y89 to T112. One can recognise a Helicase C-terminal domain in the interval Q431–I593. Residues A622–L657 form the UVR domain.

The protein belongs to the UvrB family. In terms of assembly, forms a heterotetramer with UvrA during the search for lesions. Interacts with UvrC in an incision complex.

The protein localises to the cytoplasm. In terms of biological role, the UvrABC repair system catalyzes the recognition and processing of DNA lesions. A damage recognition complex composed of 2 UvrA and 2 UvrB subunits scans DNA for abnormalities. Upon binding of the UvrA(2)B(2) complex to a putative damaged site, the DNA wraps around one UvrB monomer. DNA wrap is dependent on ATP binding by UvrB and probably causes local melting of the DNA helix, facilitating insertion of UvrB beta-hairpin between the DNA strands. Then UvrB probes one DNA strand for the presence of a lesion. If a lesion is found the UvrA subunits dissociate and the UvrB-DNA preincision complex is formed. This complex is subsequently bound by UvrC and the second UvrB is released. If no lesion is found, the DNA wraps around the other UvrB subunit that will check the other stand for damage. In Campylobacter jejuni (strain RM1221), this protein is UvrABC system protein B.